Here is a 275-residue protein sequence, read N- to C-terminus: Phosphate import ATP-binding protein PstB (275 aa).

The ABC transporter domain maps to 28-270; it reads IDCRDIRVFY…PREKRTEDYI (243 aa). 60–67 serves as a coordination point for ATP; the sequence is GPSGCGKS.

Belongs to the ABC transporter superfamily. Phosphate importer (TC 3.A.1.7) family. The complex is composed of two ATP-binding proteins (PstB), two transmembrane proteins (PstC and PstA) and a solute-binding protein (PstS).

It is found in the cell inner membrane. It catalyses the reaction phosphate(out) + ATP + H2O = ADP + 2 phosphate(in) + H(+). Part of the ABC transporter complex PstSACB involved in phosphate import. Responsible for energy coupling to the transport system. The chain is Phosphate import ATP-binding protein PstB from Hyphomonas neptunium (strain ATCC 15444).